The primary structure comprises 398 residues: Isopenicillin N epimerase (398 aa).

An N6-(pyridoxal phosphate)lysine modification is found at lysine 217.

The protein belongs to the class-V pyridoxal-phosphate-dependent aminotransferase family. Pyridoxal 5'-phosphate is required as a cofactor.

It catalyses the reaction isopenicillin N = penicillin N. Its pathway is antibiotic biosynthesis; cephalosporin C biosynthesis. Its function is as follows. Catalyzes the reversible isomerization between isopenicillin N and penicillin N. This is Isopenicillin N epimerase (cefD) from Streptomyces clavuligerus.